The primary structure comprises 536 residues: Chaperonin GroEL 2 (536 aa).

Residues 29-32 (TLGP), 86-90 (DGTTT), Gly-413, 476-478 (NAA), and Asp-492 contribute to the ATP site.

It belongs to the chaperonin (HSP60) family. In terms of assembly, forms a cylinder of 14 subunits composed of two heptameric rings stacked back-to-back. Interacts with the co-chaperonin GroES.

It is found in the cytoplasm. The catalysed reaction is ATP + H2O + a folded polypeptide = ADP + phosphate + an unfolded polypeptide.. Its function is as follows. Together with its co-chaperonin GroES, plays an essential role in assisting protein folding. The GroEL-GroES system forms a nano-cage that allows encapsulation of the non-native substrate proteins and provides a physical environment optimized to promote and accelerate protein folding. The protein is Chaperonin GroEL 2 of Moorella thermoacetica (strain ATCC 39073 / JCM 9320).